Here is a 749-residue protein sequence, read N- to C-terminus: Catalase-peroxidase (749 aa).

The segment at residues 98–234 (WHAAGTYRVQ…LAASHMGLIY (137 aa)) is a cross-link (tryptophyl-tyrosyl-methioninium (Trp-Tyr) (with M-260)). His-99 serves as the catalytic Proton acceptor. A cross-link (tryptophyl-tyrosyl-methioninium (Tyr-Met) (with W-98)) is located at residues 234–260 (YVNPEGPNGEPDPVAAAHDIRTTFGRM). His-275 contributes to the heme b binding site.

Belongs to the peroxidase family. Peroxidase/catalase subfamily. Homodimer or homotetramer. Heme b is required as a cofactor. Post-translationally, formation of the three residue Trp-Tyr-Met cross-link is important for the catalase, but not the peroxidase activity of the enzyme.

It is found in the cytoplasm. It catalyses the reaction H2O2 + AH2 = A + 2 H2O. The enzyme catalyses 2 H2O2 = O2 + 2 H2O. Its function is as follows. Bifunctional enzyme with both catalase and broad-spectrum peroxidase activity. In Mycosarcoma maydis (Corn smut fungus), this protein is Catalase-peroxidase.